The following is a 1276-amino-acid chain: Probable ubiquitin carboxyl-terminal hydrolase K02C4.3 (1276 aa).

Positions 168–762 constitute a USP domain; that stretch reads TGLYNSGNTC…SAYMLMYVRS (595 aa). Cys177 serves as the catalytic Nucleophile. The disordered stretch occupies residues 375-402; the sequence is SMDTEAATSSNLPGNSVENHPNPAAPEV. Residues 380–393 are compositionally biased toward polar residues; the sequence is AATSSNLPGNSVEN. His707 serves as the catalytic Proton acceptor.

The protein belongs to the peptidase C19 family.

The enzyme catalyses Thiol-dependent hydrolysis of ester, thioester, amide, peptide and isopeptide bonds formed by the C-terminal Gly of ubiquitin (a 76-residue protein attached to proteins as an intracellular targeting signal).. This chain is Probable ubiquitin carboxyl-terminal hydrolase K02C4.3, found in Caenorhabditis elegans.